Reading from the N-terminus, the 312-residue chain is Ribonuclease HIII (312 aa).

The RNase H type-2 domain maps to 95 to 311; the sequence is FNCIGSDEAG…REKAQKILKP (217 aa). A divalent metal cation is bound by residues aspartate 101, glutamate 102, and aspartate 206.

This sequence belongs to the RNase HII family. RnhC subfamily. Requires Mn(2+) as cofactor. Mg(2+) is required as a cofactor.

The protein resides in the cytoplasm. It catalyses the reaction Endonucleolytic cleavage to 5'-phosphomonoester.. Endonuclease that specifically degrades the RNA of RNA-DNA hybrids. In Staphylococcus aureus (strain Mu3 / ATCC 700698), this protein is Ribonuclease HIII.